A 2378-amino-acid chain; its full sequence is Dimodular nonribosomal peptide synthase (2378 aa).

Carrier domains are found at residues 961–1036 and 2036–2111; these read APRT…DLAQ and GPRT…EMGS. O-(pantetheine 4'-phosphoryl)serine is present on residues S996 and S2071.

It belongs to the ATP-dependent AMP-binding enzyme family. It depends on pantetheine 4'-phosphate as a cofactor.

The enzyme catalyses holo-[peptidyl-carrier protein] + L-threonine + ATP = L-threonyl-[peptidyl-carrier protein] + AMP + diphosphate. The catalysed reaction is holo-[peptidyl-carrier protein] + glycine + ATP = glycyl-[peptidyl-carrier protein] + AMP + diphosphate. It functions in the pathway siderophore biosynthesis; bacillibactin biosynthesis. In terms of biological role, specifically adenylates L-threonine and, to a lesser extent, glycine and covalently loads both amino acids onto their corresponding peptidyl carrier domains. The sequence is that of Dimodular nonribosomal peptide synthase (dhbF) from Bacillus subtilis (strain 168).